The following is a 30-amino-acid chain: Kalata-B5 (30 aa).

The segment at residues 1–30 is a cross-link (cyclopeptide (Gly-Asn)); it reads GTPCGESCVYIPCISGVIGCSCTDKVCYLN. Cystine bridges form between C4–C20, C8–C22, and C13–C27.

Post-translationally, this is a cyclic peptide.

Functionally, probably participates in a plant defense mechanism. In Oldenlandia affinis, this protein is Kalata-B5.